The chain runs to 247 residues: 4-hydroxy-tetrahydrodipicolinate reductase (247 aa).

NAD(+) is bound by residues 9 to 14 (GAAGRM), 76 to 78 (GTT), and 103 to 106 (APNF). The active-site Proton donor/acceptor is His-133. His-134 contributes to the (S)-2,3,4,5-tetrahydrodipicolinate binding site. Lys-137 serves as the catalytic Proton donor. 143–144 (GT) contacts (S)-2,3,4,5-tetrahydrodipicolinate.

It belongs to the DapB family.

The protein localises to the cytoplasm. The catalysed reaction is (S)-2,3,4,5-tetrahydrodipicolinate + NAD(+) + H2O = (2S,4S)-4-hydroxy-2,3,4,5-tetrahydrodipicolinate + NADH + H(+). The enzyme catalyses (S)-2,3,4,5-tetrahydrodipicolinate + NADP(+) + H2O = (2S,4S)-4-hydroxy-2,3,4,5-tetrahydrodipicolinate + NADPH + H(+). Its pathway is amino-acid biosynthesis; L-lysine biosynthesis via DAP pathway; (S)-tetrahydrodipicolinate from L-aspartate: step 4/4. Its function is as follows. Catalyzes the conversion of 4-hydroxy-tetrahydrodipicolinate (HTPA) to tetrahydrodipicolinate. The sequence is that of 4-hydroxy-tetrahydrodipicolinate reductase from Beutenbergia cavernae (strain ATCC BAA-8 / DSM 12333 / CCUG 43141 / JCM 11478 / NBRC 16432 / NCIMB 13614 / HKI 0122).